The following is a 757-amino-acid chain: Kin of IRRE-like protein 1 (757 aa).

Positions 1–16 (MLSLLVWILTLSDTFS) are cleaved as a signal peptide. At 17-499 (QGTQTRFSQE…REVLPVGIIA (483 aa)) the chain is on the extracellular side. Ig-like C2-type domains lie at 21 to 115 (TRFS…AKLT), 120 to 216 (PEDT…TSIE), 223 to 299 (PTVT…TNVS), 308 to 387 (PRIV…EVPL), and 392 to 488 (PPII…IQLE). Cysteine 42 and cysteine 100 are disulfide-bonded. N-linked (GlcNAc...) asparagine glycosylation is found at asparagine 46 and asparagine 140. 2 disulfide bridges follow: cysteine 143-cysteine 200 and cysteine 244-cysteine 287. Asparagine 297 carries an N-linked (GlcNAc...) asparagine glycan. Cysteine 329 and cysteine 371 are disulfide-bonded. A Cell attachment site motif is present at residues 405–407 (RGD). A disulfide bridge connects residues cysteine 413 and cysteine 472. A glycan (N-linked (GlcNAc...) asparagine) is linked at asparagine 471. Residues 500 to 520 (GATIGASILLIFFFIALVFFL) traverse the membrane as a helical segment. Topologically, residues 521 to 757 (YRRRKGSRKD…RFQQRMQTHV (237 aa)) are cytoplasmic. Serine 574 carries the phosphoserine modification. Phosphotyrosine; by FYN is present on residues tyrosine 605 and tyrosine 606. Phosphotyrosine occurs at positions 622 and 625. Positions 649–679 (QLNTYSRGPASDYGPEPTPPGPAAPAGTDTT) are disordered. Position 724 is a phosphotyrosine (tyrosine 724).

It belongs to the immunoglobulin superfamily. As to quaternary structure, interacts with TJP1/ZO-1 and with NPHS2/podocin (via the C-terminus). Interacts with NPHS1/nephrin (via the Ig-like domains); this interaction is dependent on KIRREL1 glycosylation. Homodimer (via the Ig-like domains). Interacts when tyrosine-phosphorylated with GRB2. In terms of processing, phosphorylation probably regulates the interaction with NSH2. Phosphorylated at Tyr-605 and Tyr-606 by FYN, leading to GRB2 binding. N-glycosylated. In terms of tissue distribution, abundantly expressed in kidney. Specifically expressed in podocytes of kidney glomeruli.

Its subcellular location is the cell membrane. In terms of biological role, required for proper function of the glomerular filtration barrier. It is involved in the maintenance of a stable podocyte architecture with interdigitating foot processes connected by specialized cell-cell junctions, known as the slit diaphragm. It is a signaling protein that needs the presence of TEC kinases to fully trans-activate the transcription factor AP-1. The polypeptide is Kin of IRRE-like protein 1 (Homo sapiens (Human)).